Consider the following 372-residue polypeptide: Cytochrome b (372 aa).

4 helical membrane passes run 25–45, 69–90, 105–125, and 170–190; these read FGSM…FLAI, WIMQ…YTHI, WLSG…GYVL, and FFAL…IHIM. 2 residues coordinate heme b: H75 and H89. Residues H174 and H188 each contribute to the heme b site. H193 is a binding site for a ubiquinone. The next 4 helical transmembrane spans lie at 218–238, 280–300, 312–332, and 339–358; these read YKDM…MSFM, LGGT…PFTH, ITQV…WTAT, and FILI…IIHP.

It belongs to the cytochrome b family. The cytochrome bc1 complex contains 3 respiratory subunits (MT-CYB, CYC1 and UQCRFS1), 2 core proteins (UQCRC1 and UQCRC2) and probably 6 low-molecular weight proteins. Heme b is required as a cofactor.

Its subcellular location is the mitochondrion inner membrane. In terms of biological role, component of the ubiquinol-cytochrome c reductase complex (complex III or cytochrome b-c1 complex) that is part of the mitochondrial respiratory chain. The b-c1 complex mediates electron transfer from ubiquinol to cytochrome c. Contributes to the generation of a proton gradient across the mitochondrial membrane that is then used for ATP synthesis. This Pseudechis australis (Mulga snake) protein is Cytochrome b (MT-CYB).